A 320-amino-acid chain; its full sequence is ATP-dependent 6-phosphofructokinase (320 aa).

Gly12 is a binding site for ATP. 22 to 26 (RGVVR) serves as a coordination point for ADP. ATP is bound by residues 73 to 74 (RF) and 103 to 106 (GDGS). Asp104 lines the Mg(2+) pocket. 126–128 (TID) contributes to the substrate binding site. Asp128 functions as the Proton acceptor in the catalytic mechanism. Arg155 lines the ADP pocket. Substrate-binding positions include Arg163 and 170-172 (MGR). ADP contacts are provided by residues 186–188 (GCE), Lys212, and 214–216 (KKH). Residues Glu223, Arg244, and 250 to 253 (HIQR) contribute to the substrate site.

Belongs to the phosphofructokinase type A (PFKA) family. ATP-dependent PFK group I subfamily. Prokaryotic clade 'B1' sub-subfamily. Homotetramer. Requires Mg(2+) as cofactor.

The protein resides in the cytoplasm. It catalyses the reaction beta-D-fructose 6-phosphate + ATP = beta-D-fructose 1,6-bisphosphate + ADP + H(+). Its pathway is carbohydrate degradation; glycolysis; D-glyceraldehyde 3-phosphate and glycerone phosphate from D-glucose: step 3/4. Allosterically activated by ADP and other diphosphonucleosides, and allosterically inhibited by phosphoenolpyruvate. In terms of biological role, catalyzes the phosphorylation of D-fructose 6-phosphate to fructose 1,6-bisphosphate by ATP, the first committing step of glycolysis. In Aliivibrio salmonicida (strain LFI1238) (Vibrio salmonicida (strain LFI1238)), this protein is ATP-dependent 6-phosphofructokinase.